The primary structure comprises 413 residues: Succinate--CoA ligase [ADP-forming] subunit beta, mitochondrial (413 aa).

Residues 1–2 (RR) constitute a mitochondrion transit peptide. The 228-residue stretch at 11–238 (MGLLQEAGIS…SNSAYRQKKI (228 aa)) folds into the ATP-grasp domain. Residues Lys-48 and 55 to 57 (GRG) each bind ATP. Positions 208 and 222 each coordinate Mg(2+). Residues Asn-273 and 330-332 (GIM) each bind substrate.

The protein belongs to the succinate/malate CoA ligase beta subunit family. ATP-specific subunit beta subfamily. In terms of assembly, heterodimer of an alpha and a beta subunit. The beta subunit determines specificity for ATP. The cofactor is Mg(2+). In terms of tissue distribution, widely expressed. Not present in liver.

The protein localises to the mitochondrion. The enzyme catalyses succinate + ATP + CoA = succinyl-CoA + ADP + phosphate. It participates in carbohydrate metabolism; tricarboxylic acid cycle; succinate from succinyl-CoA (ligase route): step 1/1. Functionally, ATP-specific succinyl-CoA synthetase functions in the citric acid cycle (TCA), coupling the hydrolysis of succinyl-CoA to the synthesis of ATP and thus represents the only step of substrate-level phosphorylation in the TCA. The beta subunit provides nucleotide specificity of the enzyme and binds the substrate succinate, while the binding sites for coenzyme A and phosphate are found in the alpha subunit. The chain is Succinate--CoA ligase [ADP-forming] subunit beta, mitochondrial from Columba livia (Rock dove).